Reading from the N-terminus, the 226-residue chain is Leucyl/phenylalanyl-tRNA--protein transferase (226 aa).

Belongs to the L/F-transferase family.

It is found in the cytoplasm. The enzyme catalyses N-terminal L-lysyl-[protein] + L-leucyl-tRNA(Leu) = N-terminal L-leucyl-L-lysyl-[protein] + tRNA(Leu) + H(+). The catalysed reaction is N-terminal L-arginyl-[protein] + L-leucyl-tRNA(Leu) = N-terminal L-leucyl-L-arginyl-[protein] + tRNA(Leu) + H(+). It carries out the reaction L-phenylalanyl-tRNA(Phe) + an N-terminal L-alpha-aminoacyl-[protein] = an N-terminal L-phenylalanyl-L-alpha-aminoacyl-[protein] + tRNA(Phe). Functionally, functions in the N-end rule pathway of protein degradation where it conjugates Leu, Phe and, less efficiently, Met from aminoacyl-tRNAs to the N-termini of proteins containing an N-terminal arginine or lysine. This Stutzerimonas stutzeri (strain A1501) (Pseudomonas stutzeri) protein is Leucyl/phenylalanyl-tRNA--protein transferase.